The primary structure comprises 207 residues: Large ribosomal subunit protein uL4 (207 aa).

The interval 50–76 (AVKNRSAVSGGGRKPWKQKGTGRARQG) is disordered.

It belongs to the universal ribosomal protein uL4 family. As to quaternary structure, part of the 50S ribosomal subunit.

Functionally, one of the primary rRNA binding proteins, this protein initially binds near the 5'-end of the 23S rRNA. It is important during the early stages of 50S assembly. It makes multiple contacts with different domains of the 23S rRNA in the assembled 50S subunit and ribosome. Its function is as follows. Forms part of the polypeptide exit tunnel. The polypeptide is Large ribosomal subunit protein uL4 (Macrococcus caseolyticus (strain JCSC5402) (Macrococcoides caseolyticum)).